Consider the following 166-residue polypeptide: Large ribosomal subunit protein uL10 (166 aa).

The protein belongs to the universal ribosomal protein uL10 family. In terms of assembly, part of the ribosomal stalk of the 50S ribosomal subunit. The N-terminus interacts with L11 and the large rRNA to form the base of the stalk. The C-terminus forms an elongated spine to which L12 dimers bind in a sequential fashion forming a multimeric L10(L12)X complex.

Functionally, forms part of the ribosomal stalk, playing a central role in the interaction of the ribosome with GTP-bound translation factors. The protein is Large ribosomal subunit protein uL10 of Shewanella baltica (strain OS223).